The sequence spans 509 residues: Glycogen synthase (509 aa).

Residue lysine 47 participates in ADP-alpha-D-glucose binding.

It belongs to the glycosyltransferase 1 family. Bacterial/plant glycogen synthase subfamily.

The enzyme catalyses [(1-&gt;4)-alpha-D-glucosyl](n) + ADP-alpha-D-glucose = [(1-&gt;4)-alpha-D-glucosyl](n+1) + ADP + H(+). It functions in the pathway glycan biosynthesis; glycogen biosynthesis. Functionally, synthesizes alpha-1,4-glucan chains using ADP-glucose. This chain is Glycogen synthase, found in Xanthomonas euvesicatoria pv. vesicatoria (strain 85-10) (Xanthomonas campestris pv. vesicatoria).